The sequence spans 714 residues: Transcription factor SFL2 (714 aa).

Residues 15–134 (AFVHKLYTML…LVYIKRRSSS (120 aa)) mediate DNA binding. Disordered regions lie at residues 187 to 467 (YYQQ…VGVT), 565 to 658 (STSV…NNTN), and 670 to 714 (SHSQ…NMNK). Composition is skewed to pro residues over residues 193–207 (GQVP…PPHQ) and 223–235 (QPPP…PPQP). Over residues 266-275 (LDQTQPLSYT) the composition is skewed to polar residues. The span at 276–285 (PQLEYQQQQY) shows a compositional bias: low complexity. The segment covering 286-296 (PQPPLPPPPPQ) has biased composition (pro residues). Composition is skewed to polar residues over residues 310–321 (DNLSRPSPNEQH) and 354–372 (SEGS…LNNE). Residues 376-389 (ESSTSSSSTTVTST) show a composition bias toward low complexity. Composition is skewed to polar residues over residues 413 to 435 (SRMN…TQNG) and 444 to 461 (LIPS…TGTD). The span at 574–591 (GPFSTSTSTSTTSPTLSS) shows a compositional bias: low complexity. Residues 599-608 (EPQNSTIANG) are compositionally biased toward polar residues. Low complexity-rich tracts occupy residues 609–641 (TSIR…RQLS) and 648–658 (QQQQQPNNNTN). The span at 703–714 (SKSDDDTDNMNK) shows a compositional bias: basic and acidic residues.

It belongs to the HSF family.

The protein localises to the nucleus. Transcription factor that plays a role of activator of filamentous growth and which is involved in invasive growth at a high temperature. Required for human oral epithelium colonization and damage. Promotes filamentous growth in EFG1- and FLO8-dependent manners. Antagonizes functions of SFL1. The protein is Transcription factor SFL2 (SFL2) of Candida albicans (strain SC5314 / ATCC MYA-2876) (Yeast).